The sequence spans 134 residues: Aspartate 1-decarboxylase (134 aa).

Ser-25 (schiff-base intermediate with substrate; via pyruvic acid) is an active-site residue. Ser-25 carries the post-translational modification Pyruvic acid (Ser). Thr-57 lines the substrate pocket. Catalysis depends on Tyr-58, which acts as the Proton donor. 73 to 75 contributes to the substrate binding site; sequence GAA.

It belongs to the PanD family. As to quaternary structure, heterooctamer of four alpha and four beta subunits. Pyruvate is required as a cofactor. Is synthesized initially as an inactive proenzyme, which is activated by self-cleavage at a specific serine bond to produce a beta-subunit with a hydroxyl group at its C-terminus and an alpha-subunit with a pyruvoyl group at its N-terminus.

The protein localises to the cytoplasm. The catalysed reaction is L-aspartate + H(+) = beta-alanine + CO2. It participates in cofactor biosynthesis; (R)-pantothenate biosynthesis; beta-alanine from L-aspartate: step 1/1. Functionally, catalyzes the pyruvoyl-dependent decarboxylation of aspartate to produce beta-alanine. This Geobacter sp. (strain M21) protein is Aspartate 1-decarboxylase.